Here is an 892-residue protein sequence, read N- to C-terminus: Alanine--tRNA ligase (892 aa).

Zn(2+) is bound by residues His-596, His-600, Cys-700, and His-704.

This sequence belongs to the class-II aminoacyl-tRNA synthetase family. Zn(2+) serves as cofactor.

The protein resides in the cytoplasm. It carries out the reaction tRNA(Ala) + L-alanine + ATP = L-alanyl-tRNA(Ala) + AMP + diphosphate. In terms of biological role, catalyzes the attachment of alanine to tRNA(Ala) in a two-step reaction: alanine is first activated by ATP to form Ala-AMP and then transferred to the acceptor end of tRNA(Ala). Also edits incorrectly charged Ser-tRNA(Ala) and Gly-tRNA(Ala) via its editing domain. The polypeptide is Alanine--tRNA ligase (Methanococcus maripaludis (strain DSM 14266 / JCM 13030 / NBRC 101832 / S2 / LL)).